A 162-amino-acid polypeptide reads, in one-letter code: Troponin C, skeletal muscle (162 aa).

4 consecutive EF-hand domains span residues 17–52 (EMIA…LGQN), 53–88 (PTKE…QMKE), 93–128 (KSEE…TGEH), and 129–162 (VTEE…EGVQ). Ca(2+) contacts are provided by aspartate 30, aspartate 32, aspartate 36, glutamate 41, aspartate 66, aspartate 68, serine 70, threonine 72, glutamate 77, aspartate 106, asparagine 108, aspartate 110, glutamate 117, aspartate 142, asparagine 144, aspartate 146, arginine 148, and glutamate 153.

The protein belongs to the troponin C family.

Its function is as follows. Troponin is the central regulatory protein of striated muscle contraction. Tn consists of three components: Tn-I which is the inhibitor of actomyosin ATPase, Tn-T which contains the binding site for tropomyosin and Tn-C. The binding of calcium to Tn-C abolishes the inhibitory action of Tn on actin filaments. In Meleagris gallopavo (Wild turkey), this protein is Troponin C, skeletal muscle (TNNC2).